A 257-amino-acid chain; its full sequence is 4-hydroxy-tetrahydrodipicolinate reductase (257 aa).

NAD(+) is bound by residues 11 to 16 (GANGRM) and E37. Position 38 (R38) interacts with NADP(+). Residues 86–88 (GST) and 110–113 (SGNY) each bind NAD(+). The active-site Proton donor/acceptor is H144. (S)-2,3,4,5-tetrahydrodipicolinate is bound at residue H145. Residue K148 is the Proton donor of the active site. 154–155 (GT) provides a ligand contact to (S)-2,3,4,5-tetrahydrodipicolinate.

It belongs to the DapB family.

Its subcellular location is the cytoplasm. It carries out the reaction (S)-2,3,4,5-tetrahydrodipicolinate + NAD(+) + H2O = (2S,4S)-4-hydroxy-2,3,4,5-tetrahydrodipicolinate + NADH + H(+). The enzyme catalyses (S)-2,3,4,5-tetrahydrodipicolinate + NADP(+) + H2O = (2S,4S)-4-hydroxy-2,3,4,5-tetrahydrodipicolinate + NADPH + H(+). The protein operates within amino-acid biosynthesis; L-lysine biosynthesis via DAP pathway; (S)-tetrahydrodipicolinate from L-aspartate: step 4/4. In terms of biological role, catalyzes the conversion of 4-hydroxy-tetrahydrodipicolinate (HTPA) to tetrahydrodipicolinate. The chain is 4-hydroxy-tetrahydrodipicolinate reductase from Caulobacter vibrioides (strain ATCC 19089 / CIP 103742 / CB 15) (Caulobacter crescentus).